A 106-amino-acid chain; its full sequence is uncharacterized protein (106 aa).

The chain crosses the membrane as a helical span at residues 9-27 (ALAALAFTLGLIGLAAWAL). Positions 84 to 106 (TPKGPPPASALSPSPVAEPEPVV) are disordered.

The protein belongs to the FliO/MopB family.

It localises to the cell membrane. It is found in the bacterial flagellum basal body. This is an uncharacterized protein from Caulobacter vibrioides (strain ATCC 19089 / CIP 103742 / CB 15) (Caulobacter crescentus).